A 516-amino-acid polypeptide reads, in one-letter code: Putative fatty acyl-CoA reductase CG8306 (516 aa).

3 helical membrane-spanning segments follow: residues 356–376 (WVFRLSAILFHFIPAIILDLV), 471–491 (ILLGLHVALQLSFWYGVFKLI), and 496–516 (GISTAKAALVLPVLYYLFGLL).

This sequence belongs to the fatty acyl-CoA reductase family.

The protein resides in the membrane. The catalysed reaction is a long-chain fatty acyl-CoA + 2 NADPH + 2 H(+) = a long-chain primary fatty alcohol + 2 NADP(+) + CoA. Functionally, catalyzes the reduction of C16 or C18 fatty acyl-CoA to fatty alcohols. This is Putative fatty acyl-CoA reductase CG8306 from Drosophila melanogaster (Fruit fly).